A 240-amino-acid chain; its full sequence is Bactofilin BacP (240 aa).

Residues 116–240 form an interacts with PadC region; that stretch reads DVEPGRLPAE…KKVVVKKKTR (125 aa). The tract at residues 117–240 is disordered; that stretch reads VEPGRLPAER…KKVVVKKKTR (124 aa). The segment covering 126-150 has biased composition (low complexity); it reads RPAVVRPTAVTRPTATPARPTIPAA. The segment covering 151–173 has biased composition (pro residues); the sequence is RPMPPPPPSRPTPPPPPARPSAP. Basic residues predominate over residues 229–240; that stretch reads AKKKVVVKKKTR.

It belongs to the bactofilin family. In terms of assembly, interacts with BacN and probably also BacO, the 3 proteins colocalize as an extended structure. Interacts with PadC.

The protein localises to the cytoplasm. It localises to the cytoskeleton. In terms of biological role, a non-essential component of the chromosome segregation machinery. Positions the ParA-ParB-parS chromosome segregation machinery within the cell; BacP seems to be the most important bactofilin in this process. Forms a heteropolymeric, subpolar scaffold in the cell; BacP probably forms the core, BacO contributes to position and integrity while BacN does not seem to contribute to assembly. This chain is Bactofilin BacP, found in Myxococcus xanthus (strain DK1622).